A 433-amino-acid chain; its full sequence is MSLMTKLGFRALVASCLIAAGGAAHAQVNVLITGVGSTQFPIATANFVNEASLPQQVTSVVRGDLARSGKFSNVDAGSTPVPETASVDFGAWKAKGANAFVAGSVNREPNGQYKVNFILYDTVKQQSLGGLSLTTSNDNEGMRKTGHKIADYIYQKLLGVRGVFNTRLSYVQRTGNVYKLLISDSDGQNAIPALTSKEPIISPAWSPSGTKVAYVSFELRKPVVYIHDLPTGRRYVISNQKGNNSAPAWSPDGQTLAVALSLTGNTQIYSVSSTGTGLRRLTRSSSIDTEPFYSPDGKWIYFTSDRGGAPQIYRMPAEGESAGAAQRVTFTGSYNTSPRVSPDGKLLAYISRTGGGFKLYVQDLQSGAANAVTNTTRDESPSFAANGQYILYATQSGGRSVLAAVPSDGSAPPQILSVQGGAIREPSWGPFMQ.

Residues M1–A26 form the signal peptide.

Belongs to the TolB family. In terms of assembly, the Tol-Pal system is composed of five core proteins: the inner membrane proteins TolA, TolQ and TolR, the periplasmic protein TolB and the outer membrane protein Pal. They form a network linking the inner and outer membranes and the peptidoglycan layer.

The protein resides in the periplasm. Its function is as follows. Part of the Tol-Pal system, which plays a role in outer membrane invagination during cell division and is important for maintaining outer membrane integrity. The protein is Tol-Pal system protein TolB of Burkholderia pseudomallei (strain 1710b).